Reading from the N-terminus, the 207-residue chain is Immunity protein SdpI (207 aa).

6 helical membrane-spanning segments follow: residues 5–25 (IISI…YQYL), 47–67 (TIFI…MLTI), 78–98 (FLAS…TLLI), 100–120 (LGYE…FLII), 150–170 (LGNR…AVLS), and 171–191 (FFTG…ALVI).

It is found in the membrane. Its function is as follows. Immunity protein that provides protection for the cell against the toxic effects of SDP, its own SdpC-derived killing factor, and that functions as a receptor/signal transduction protein as well. Once SDP accumulates in the extracellular milieu, SdpI binds to SDP, causing sequestration of SdpR at the bacterial membrane. The chain is Immunity protein SdpI (sdpI) from Bacillus subtilis (strain 168).